A 181-amino-acid chain; its full sequence is Glucose-1-phosphate adenylyltransferase large subunit 2 (181 aa).

Belongs to the bacterial/plant glucose-1-phosphate adenylyltransferase family. As to quaternary structure, heterotetramer. In terms of tissue distribution, leaves.

Its subcellular location is the plastid. The protein resides in the chloroplast. The protein localises to the amyloplast. It catalyses the reaction alpha-D-glucose 1-phosphate + ATP + H(+) = ADP-alpha-D-glucose + diphosphate. The protein operates within glycan biosynthesis; starch biosynthesis. Highly active without 3'phosphoglycerate, and is only slightly affected by the activator 3'phosphoglycerate and inhibitor orthophosphate. This protein plays a role in synthesis of starch. It catalyzes the synthesis of the activated glycosyl donor, ADP-glucose from Glc-1-P and ATP. This Hordeum vulgare (Barley) protein is Glucose-1-phosphate adenylyltransferase large subunit 2.